The chain runs to 519 residues: ATP synthase subunit alpha 2 (519 aa).

179 to 186 (GDRQTGKT) provides a ligand contact to ATP.

The protein belongs to the ATPase alpha/beta chains family. In terms of assembly, F-type ATPases have 2 components, CF(1) - the catalytic core - and CF(0) - the membrane proton channel. CF(1) has five subunits: alpha(3), beta(3), gamma(1), delta(1), epsilon(1). CF(0) has three main subunits: a(1), b(2) and c(9-12). The alpha and beta chains form an alternating ring which encloses part of the gamma chain. CF(1) is attached to CF(0) by a central stalk formed by the gamma and epsilon chains, while a peripheral stalk is formed by the delta and b chains.

Its subcellular location is the cell inner membrane. The catalysed reaction is ATP + H2O + 4 H(+)(in) = ADP + phosphate + 5 H(+)(out). In terms of biological role, produces ATP from ADP in the presence of a proton gradient across the membrane. The alpha chain is a regulatory subunit. This chain is ATP synthase subunit alpha 2, found in Syntrophus aciditrophicus (strain SB).